The primary structure comprises 415 residues: MNEPEGLRFRRLNRPHIITDETHEPQYKATSTYSGKVFRVTLLTMVAFLLLPLLVVVFVLESPIQPEVFSLNEPPLMTGCYEPNLKLRQAERLFEERLVGPESLANIGDVFYTGTADGKIVKIEGRNIHVLATIGKPPCGSREHEHTCGRPLGIRVGPNGTLFVADAYLGLFEVNPVTGEVKSLVSTEKRIAGRRLGFVNDLDVTQDGKKVYFTDSSSRWQRRDFMHLIMEATADGRVLEYDTETKEVNVMMENLRFPNGIQLFPDEESVLVAETTMARIKRVHVSGLNKGGMDTFIENLPGFPDNIRRSSSGGYWVAMSAVRPNPGFSMLDFLSQRPWLKKLIFKLFSQDTLLKFVPRYSLVVELQSDGTCVRSFHDPQGLVSAYSSEAHEYSGHLYLGSFRSPYLCKLDLSKV.

Residues 1-39 (MNEPEGLRFRRLNRPHIITDETHEPQYKATSTYSGKVFR) lie on the Cytoplasmic side of the membrane. A helical transmembrane segment spans residues 40 to 60 (VTLLTMVAFLLLPLLVVVFVL). Residues 61–412 (ESPIQPEVFS…RSPYLCKLDL (352 aa)) lie on the Extracellular side of the membrane. The N-linked (GlcNAc...) asparagine glycan is linked to Asn-159.

Belongs to the strictosidine synthase family.

The protein localises to the membrane. This chain is Adipocyte plasma membrane-associated protein (apmap), found in Danio rerio (Zebrafish).